The primary structure comprises 248 residues: Protein PARTING DANCERS homolog (248 aa).

The segment covering 1-10 (MERSTHSTGW) has biased composition (polar residues). Positions 1 to 25 (MERSTHSTGWTCLPPPPPEPAAPGR) are disordered.

The protein belongs to the ERCC1/RAD10/SWI10 family. Interacts with SHOC1 (via C-terminus). Interacts with HEI10. In terms of tissue distribution, highly expressed in anthers and pistil during meiosis. Expressed in pollen mother cells (PMCs) during meiosis. Expressed at low levels in roots, shoots, leaves, flowers, and glumes.

Its subcellular location is the chromosome. It localises to the nucleus. The protein resides in the cytoplasm. It is found in the cell membrane. Functionally, essential for normal crossover (CO) formation during meiosis. Essential component for the formation of class I meiotic COs. Interacts with SHOC1, another meiotic component, to regulate CO formation, possibly by stabilizing the recombination intermediates during meiosis. PTD and SHOC1 may form transient heterotrimeric or heterotetrameric complexes with HEI10 and/or ZIP4 to promote class I COs formation. Does not seem to be involved in early meiotic recombination steps involving double-strand break (DSB) formation, processing, and single-strand invasion. Does not seem to be involved in homologous pairing or synaptonemal complex (SC) assembly. The protein is Protein PARTING DANCERS homolog of Oryza sativa subsp. japonica (Rice).